Reading from the N-terminus, the 489-residue chain is Adenylosuccinate synthetase 2, chloroplastic (489 aa).

The transit peptide at 1–54 (MPLASLSLDPAPFPLIRPAAGWSGRVLPVPGPAPRLCRPLRAAPVAPATTDEPS) directs the protein to the chloroplast. GTP is bound by residues 76–82 (GDEGKGK) and 104–106 (GHT). Asp77 serves as the catalytic Proton acceptor. Mg(2+)-binding residues include Asp77 and Gly104. IMP-binding positions include 77–80 (DEGK), 102–105 (NAGH), Thr194, Arg208, Gln288, Thr303, and Arg367. The active-site Proton donor is the His105. 363–369 (TTTGRPR) serves as a coordination point for substrate. Residues Arg369, 395 to 397 (KLD), and 478 to 480 (GVG) each bind GTP.

This sequence belongs to the adenylosuccinate synthetase family. In terms of assembly, homodimer. Mg(2+) serves as cofactor.

Its subcellular location is the plastid. It is found in the chloroplast. It catalyses the reaction IMP + L-aspartate + GTP = N(6)-(1,2-dicarboxyethyl)-AMP + GDP + phosphate + 2 H(+). It participates in purine metabolism; AMP biosynthesis via de novo pathway; AMP from IMP: step 1/2. Functionally, plays an important role in the de novo pathway and in the salvage pathway of purine nucleotide biosynthesis. Catalyzes the first committed step in the biosynthesis of AMP from IMP. This chain is Adenylosuccinate synthetase 2, chloroplastic, found in Sorghum bicolor (Sorghum).